Here is a 109-residue protein sequence, read N- to C-terminus: Synaptobrevin-1 (109 aa).

A disordered region spans residues 1-26 (MDAQGDAGAQGGSQGGPRPSNKRLQQ). The Cytoplasmic segment spans residues 1 to 86 (MDAQGDAGAQ…KRKYWWKNIK (86 aa)). Residues 23-83 (RLQQTQAQVD…ATLKRKYWWK (61 aa)) form the v-SNARE coiled-coil homology domain. Residues 87–107 (MMIIMCAIVVILIIIIVLWAG) traverse the membrane as a helical; Anchor for type IV membrane protein segment. Residues 108-109 (GK) lie on the Extracellular side of the membrane.

It belongs to the synaptobrevin family. In terms of assembly, part of the SNARE core complex containing ric-4/SNAP25, snb-1/VAMP2 and unc-64/STX1A. This complex binds to cpx-1/CPLX1. Expressed in the nervous system notably the nerve ring, ventral cord and dorsal cord.

The protein resides in the cytoplasmic vesicle. Its subcellular location is the secretory vesicle. It localises to the synaptic vesicle membrane. The protein localises to the cell membrane. It is found in the synapse. The protein resides in the synaptosome. Its function is as follows. Involved in the targeting and/or fusion of transport vesicles to their target membrane. Acts in neuronal exocytosis of synaptic transmission. Likely to have a role in cholinergic transmisson. Required for viability, coordinated movement and M3 pharynx motor neuron function. The polypeptide is Synaptobrevin-1 (Caenorhabditis elegans).